The sequence spans 213 residues: Protein-L-isoaspartate O-methyltransferase (213 aa).

The active site involves Ser-60.

The protein belongs to the methyltransferase superfamily. L-isoaspartyl/D-aspartyl protein methyltransferase family.

Its subcellular location is the cytoplasm. It catalyses the reaction [protein]-L-isoaspartate + S-adenosyl-L-methionine = [protein]-L-isoaspartate alpha-methyl ester + S-adenosyl-L-homocysteine. Its function is as follows. Catalyzes the methyl esterification of L-isoaspartyl residues in peptides and proteins that result from spontaneous decomposition of normal L-aspartyl and L-asparaginyl residues. It plays a role in the repair and/or degradation of damaged proteins. In Roseobacter denitrificans (strain ATCC 33942 / OCh 114) (Erythrobacter sp. (strain OCh 114)), this protein is Protein-L-isoaspartate O-methyltransferase.